We begin with the raw amino-acid sequence, 162 residues long: Protein-export protein SecB (162 aa).

It belongs to the SecB family. As to quaternary structure, homotetramer, a dimer of dimers. One homotetramer interacts with 1 SecA dimer.

The protein localises to the cytoplasm. Functionally, one of the proteins required for the normal export of preproteins out of the cell cytoplasm. It is a molecular chaperone that binds to a subset of precursor proteins, maintaining them in a translocation-competent state. It also specifically binds to its receptor SecA. The sequence is that of Protein-export protein SecB from Legionella pneumophila (strain Paris).